Here is a 182-residue protein sequence, read N- to C-terminus: NADH-quinone oxidoreductase subunit B 2 (182 aa).

4 residues coordinate [4Fe-4S] cluster: Cys57, Cys58, Cys123, and Cys153.

The protein belongs to the complex I 20 kDa subunit family. In terms of assembly, NDH-1 is composed of 14 different subunits. Subunits NuoB, C, D, E, F, and G constitute the peripheral sector of the complex. [4Fe-4S] cluster is required as a cofactor.

It is found in the cell membrane. The enzyme catalyses a quinone + NADH + 5 H(+)(in) = a quinol + NAD(+) + 4 H(+)(out). In terms of biological role, NDH-1 shuttles electrons from NADH, via FMN and iron-sulfur (Fe-S) centers, to quinones in the respiratory chain. The immediate electron acceptor for the enzyme in this species is believed to be a menaquinone. Couples the redox reaction to proton translocation (for every two electrons transferred, four hydrogen ions are translocated across the cytoplasmic membrane), and thus conserves the redox energy in a proton gradient. The polypeptide is NADH-quinone oxidoreductase subunit B 2 (Symbiobacterium thermophilum (strain DSM 24528 / JCM 14929 / IAM 14863 / T)).